The sequence spans 166 residues: Regulatory protein RecX (166 aa).

The protein belongs to the RecX family.

The protein resides in the cytoplasm. Functionally, modulates RecA activity. This is Regulatory protein RecX from Salmonella paratyphi A (strain ATCC 9150 / SARB42).